The sequence spans 466 residues: MRNSWVASRKGKTNVSQMHFARKGEITEEMRYVAKRENLPESLVMEEVARGRMIIPANINHINLEPMAIGIASTCKVNANIGASPNASDISEELKKLDLAVKYGADTLMDLSTGGVNLDEVRTEIINASPIPIGTVPVYQALESVHGSISRLNEDDFLHIIEKHCQQGVDYQTIHAGLLIEHLPKVKGRITGIVSRGGGILAQWMLYHYKQNPLFTRFDDICEIFKRYDCTFSLGDSLRPGCLHDASDEAQLAELKTLGELTRRAWKHDVQVMVEGPGHVPMDQIEFNVRKQMEECSEAPFYVLGPLVTDISPGYDHISSAIGAAMAGWYGTAMLCYVTPKEHLGLPNPEDVREGLIAYKIAAHAADVARHRSGARDRDDELSKARKEFDWNKQFELSLDPEKAKQYHDETLPEEIFKKAEFCSMCGPNHCPMNTKITDEDLDQLNDQIQSKGAAELTPVKLNKEN.

Substrate-binding positions include N80, M109, Y139, H175, 195-197, 236-239, and E275; these read SRG and DSLR. Zn(2+) is bound at residue H279. Residue Y302 participates in substrate binding. Zn(2+) is bound at residue H343. [4Fe-4S] cluster is bound by residues C423, C426, and C431.

The protein belongs to the ThiC family. The cofactor is [4Fe-4S] cluster.

The catalysed reaction is 5-amino-1-(5-phospho-beta-D-ribosyl)imidazole + S-adenosyl-L-methionine = 4-amino-2-methyl-5-(phosphooxymethyl)pyrimidine + CO + 5'-deoxyadenosine + formate + L-methionine + 3 H(+). It functions in the pathway cofactor biosynthesis; thiamine diphosphate biosynthesis. Catalyzes the synthesis of the hydroxymethylpyrimidine phosphate (HMP-P) moiety of thiamine from aminoimidazole ribotide (AIR) in a radical S-adenosyl-L-methionine (SAM)-dependent reaction. The protein is Phosphomethylpyrimidine synthase of Prochlorococcus marinus (strain NATL1A).